The sequence spans 506 residues: Probable E3 ubiquitin-protein ligase ARI14 (506 aa).

The interval 79–308 (PDSSSEISLE…VDSGFCIKTE (230 aa)) is TRIAD supradomain. The RING-type 1 zinc-finger motif lies at 83-140 (SEISLETDVYEFDGDNDLISMPFCSHKFDSKYWREYLEKNFYYVEKIQTTISCPDQDC). Zn(2+) is bound by residues cysteine 106, histidine 108, cysteine 135, cysteine 140, cysteine 180, cysteine 185, cysteine 207, cysteine 209, cysteine 214, cysteine 217, histidine 222, cysteine 227, cysteine 258, cysteine 261, cysteine 277, cysteine 279, cysteine 284, cysteine 287, histidine 294, and cysteine 304. Residues 158 to 227 (EMYERYIWRS…RLESHRPVSC (70 aa)) form an IBR-type zinc finger. The segment at 258–287 (CPHCLCSLESDTKMPQFLTCVCRLRFCSRC) adopts an RING-type 2; atypical zinc-finger fold. The segment at 462-492 (GTGPFWYCDRCTYANTWEDNECEMCYDDSAS) adopts a RanBP2-type zinc-finger fold.

This sequence belongs to the RBR family. Ariadne subfamily. Zn(2+) is required as a cofactor. Mostly expressed in closed flowers and, to a lower extent, in pollen.

It catalyses the reaction [E2 ubiquitin-conjugating enzyme]-S-ubiquitinyl-L-cysteine + [acceptor protein]-L-lysine = [E2 ubiquitin-conjugating enzyme]-L-cysteine + [acceptor protein]-N(6)-ubiquitinyl-L-lysine.. It participates in protein modification; protein ubiquitination. Functionally, might act as an E3 ubiquitin-protein ligase, or as part of E3 complex, which accepts ubiquitin from specific E2 ubiquitin-conjugating enzymes and then transfers it to substrates. Negatively regulates male gametophyte formation and double fertilization. The chain is Probable E3 ubiquitin-protein ligase ARI14 from Arabidopsis thaliana (Mouse-ear cress).